The following is a 70-amino-acid chain: UPF0150 protein TM_1311 (70 aa).

The protein belongs to the UPF0150 family.

In Thermotoga maritima (strain ATCC 43589 / DSM 3109 / JCM 10099 / NBRC 100826 / MSB8), this protein is UPF0150 protein TM_1311.